The chain runs to 40 residues: Protein P4 (40 aa).

A helical membrane pass occupies residues 10–29; it reads KYFAYGVAISAAGAILAEYV.

The protein localises to the virion membrane. May interact with the viral DNA. This is Protein P4 (IV) from Pseudoalteromonas phage PM2 (Bacteriophage PM2).